The sequence spans 368 residues: MRLDSISIANFRNHTLLEFEPGHSITNIYGRNGSGKTSILEAIHYCALTRGFSGNNDREYLKFGEELFTIRSSFTSGQGIATKVSITYSPKREKRILVNEQELQTFSSHIGTIPCVTFTPREMVIINGAPAERRRFIDTAICQYDRKYLSDLLLYRRILQQRNALLSSEQDPRVIDSALDVLTDQLVAIATEIVLVRKRFIEHFTSMLGGVYQWIPEGAEPSILYQSSLGHHENLYEKDKIQQVFRERFETLKQQELQRRQTLAGPHRDDLQFYLNKREIRKYASQGQQRAFLVAMKMTLQGYLYEASGEIPITLLDDLFSELDEVVSGTMVETLATKGQVIITSTEKKKGKGISFFSVDDYKSSKEP.

30-37 (GRNGSGKT) serves as a coordination point for ATP.

The protein belongs to the RecF family.

The protein resides in the cytoplasm. Functionally, the RecF protein is involved in DNA metabolism; it is required for DNA replication and normal SOS inducibility. RecF binds preferentially to single-stranded, linear DNA. It also seems to bind ATP. This Chlorobaculum tepidum (strain ATCC 49652 / DSM 12025 / NBRC 103806 / TLS) (Chlorobium tepidum) protein is DNA replication and repair protein RecF.